Consider the following 256-residue polypeptide: Necrosis-inducing protein NPP1 (256 aa).

The short motif at A111–G121 is the Conserved undecapeptide motif element. The Conserved heptapeptide motif signature appears at G133–E139.

The protein belongs to the Necrosis inducing protein (NPP1) family.

It localises to the secreted. Secreted effector that acts as a pathogen-associated molecular pattern (PAMP) recognized by the plant immune system. The chain is Necrosis-inducing protein NPP1 from Phytophthora cinnamomi (Cinnamon fungus).